The chain runs to 696 residues: Polyribonucleotide nucleotidyltransferase (696 aa).

Residues Asp-483 and Asp-489 each coordinate Mg(2+). Residues 550–609 (PRITTIWVKVDKIRDVIGSGGKNIRSVTEATGVSIDIDDTGKINIASTNKEACDLAIKMI) enclose the KH domain. An S1 motif domain is found at 619-687 (GKLYMGTVKK…KQGKIKLSRK (69 aa)).

Belongs to the polyribonucleotide nucleotidyltransferase family. Mg(2+) is required as a cofactor.

The protein localises to the cytoplasm. The catalysed reaction is RNA(n+1) + phosphate = RNA(n) + a ribonucleoside 5'-diphosphate. Its function is as follows. Involved in mRNA degradation. Catalyzes the phosphorolysis of single-stranded polyribonucleotides processively in the 3'- to 5'-direction. This chain is Polyribonucleotide nucleotidyltransferase, found in Geobacter sp. (strain M21).